Here is an 86-residue protein sequence, read N- to C-terminus: Small ribosomal subunit protein bS16c (86 aa).

Belongs to the bacterial ribosomal protein bS16 family.

Its subcellular location is the plastid. The protein localises to the chloroplast. This Liriodendron tulipifera (Tuliptree) protein is Small ribosomal subunit protein bS16c.